The primary structure comprises 286 residues: MAVVTMRQLLDAGVHFGHQTRRWNPKMKRYIITERNGIYIIDLQQTLTYIDSAYEFVKETVAHGGNILFVGTKKQAQEAVATEAERVGMPYVNHRWLGGMLTNFQTVHKRLGRLKELQAMDAAENGYEGRTKKEVLMLTRERQKLERVLGGISDMNKVPSAIWIVDTNKEHIAVSEAQKLNIPVVAILDTNCDPDVVDYPIPGNDDAIRSAALLTGVIASAVEDGKKARAERAQAEAKAAAGDNDAPVSSEGESTEVASDAASTASETTATSSDESAAESSEAESK.

Residues 231–286 are disordered; that stretch reads ERAQAEAKAAAGDNDAPVSSEGESTEVASDAASTASETTATSSDESAAESSEAESK. A compositionally biased stretch (low complexity) spans 255 to 280; sequence TEVASDAASTASETTATSSDESAAES.

It belongs to the universal ribosomal protein uS2 family.

The protein is Small ribosomal subunit protein uS2 of Corynebacterium kroppenstedtii (strain DSM 44385 / JCM 11950 / CIP 105744 / CCUG 35717).